Reading from the N-terminus, the 186-residue chain is Protein TRL14 (186 aa).

Residues N24, N64, and N72 are each glycosylated (N-linked (GlcNAc...) asparagine; by host). The helical transmembrane segment at 143–163 (HAVWAGVVVSVALIALYMGSH) threads the bilayer.

This sequence belongs to the RL11 family.

It localises to the virion membrane. The sequence is that of Protein TRL14 from Human cytomegalovirus (strain AD169) (HHV-5).